Here is a 1024-residue protein sequence, read N- to C-terminus: SAC3 family protein 1 (1024 aa).

A disordered region spans residues 1 to 62 (MEKRNETGNN…QDSRQKRFSS (62 aa)). Residues 11-21 (RLKRSNNRGKS) show a composition bias toward basic residues. Basic and acidic residues predominate over residues 22–38 (KKDWKDASVETTPRETS). Acidic residues predominate over residues 39 to 52 (VDEDNTSVFEDVEA). Positions 243–433 (EVEQLRKGIL…NKTAFFNDSK (191 aa)) constitute a PCI domain. Serine 841 carries the post-translational modification Phosphoserine. Positions 945-1022 (AQLEELEVVR…ARDLLKKVET (78 aa)) form a coiled coil.

It belongs to the SAC3 family.

It localises to the cytoplasm. It is found in the nucleus envelope. The sequence is that of SAC3 family protein 1 from Schizosaccharomyces pombe (strain 972 / ATCC 24843) (Fission yeast).